The primary structure comprises 377 residues: Cytochrome c peroxidase, mitochondrial (377 aa).

Residues 1 to 17 constitute a mitochondrion transit peptide; the sequence is MSFRAPNLIRSAAGRRA. His138 (proton acceptor) is an active-site residue. His261 contacts heme b. Trp277 (tryptophan radical intermediate) is an active-site residue.

It belongs to the peroxidase family. Cytochrome c peroxidase subfamily. As to quaternary structure, forms a one-to-one complex with cytochrome c. Heme b serves as cofactor.

The protein resides in the mitochondrion matrix. The protein localises to the mitochondrion intermembrane space. It carries out the reaction 2 Fe(II)-[cytochrome c] + H2O2 + 2 H(+) = 2 Fe(III)-[cytochrome c] + 2 H2O. Functionally, destroys radicals which are normally produced within the cells and which are toxic to biological systems. The chain is Cytochrome c peroxidase, mitochondrial (CCP1) from Cryptococcus neoformans var. neoformans serotype D (strain JEC21 / ATCC MYA-565) (Filobasidiella neoformans).